The primary structure comprises 213 residues: High frequency lysogenization protein HflD homolog (213 aa).

It belongs to the HflD family.

It is found in the cytoplasm. It localises to the cell inner membrane. This is High frequency lysogenization protein HflD homolog from Klebsiella pneumoniae (strain 342).